A 280-amino-acid chain; its full sequence is uncharacterized protein (280 aa).

The N-terminal stretch at 1–21 is a signal peptide; the sequence is MRPVIKVGLSTASVYPLRAEA.

This sequence to M.tuberculosis Rv0498 and S.coelicolor SCO3347.

This is an uncharacterized protein from Mycobacterium leprae (strain TN).